We begin with the raw amino-acid sequence, 273 residues long: Progestin and adipoQ receptor family member 4 (273 aa).

5 helical membrane passes run 52-72 (IYTHGLALLGFLVLVPMTMPW), 79-99 (GWLGGTHCVACLVPPAASVLY), 115-135 (LLALDMCGVCLVNTLGALPII), 185-205 (LLVFGARGVGLGSGAPGSLPC), and 245-265 (LLSVGSILQLHAGVVPDLLWA).

Belongs to the ADIPOR family. As to quaternary structure, interacts with CERS2 and CERS5; the interaction regulates CERS2 and CERS5 stabilities and activities and is inhibited in presence of ceramides. In terms of tissue distribution, expressed in adipose tissue.

It localises to the golgi apparatus membrane. Plays a role in maintaining adipose tissue function through the regulation of ceramide levels. Mediates the stability of ceramide synthetases, CERS2 and CERS5, and their activities. The chain is Progestin and adipoQ receptor family member 4 from Mus musculus (Mouse).